A 265-amino-acid polypeptide reads, in one-letter code: Flap endonuclease Xni (265 aa).

Residue Asp-111 coordinates Mg(2+). One can recognise a 5'-3' exonuclease domain in the interval Val-167 to Ala-260. Leu-178, Val-189, and Ile-192 together coordinate K(+). Positions Gly-191–Thr-196 are interaction with DNA.

This sequence belongs to the Xni family. Requires Mg(2+) as cofactor. K(+) is required as a cofactor.

In terms of biological role, has flap endonuclease activity. During DNA replication, flap endonucleases cleave the 5'-overhanging flap structure that is generated by displacement synthesis when DNA polymerase encounters the 5'-end of a downstream Okazaki fragment. This is Flap endonuclease Xni from Aeromonas salmonicida (strain A449).